Reading from the N-terminus, the 381-residue chain is Cytosolic acyl coenzyme A thioester hydrolase (381 aa).

The region spanning 51-169 is the HotDog ACOT-type 1 domain; the sequence is LGHCVTMGRI…TLWYVPLSLK (119 aa). The active site involves asparagine 67. 2 positions are modified to N6-acetyllysine: lysine 169 and lysine 199. A HotDog ACOT-type 2 domain is found at 225–339; that stretch reads SYSQSSLIHL…FFTYVSLNQE (115 aa). Aspartate 256 is an active-site residue. Lysine 284 carries the N6-acetyllysine modification. Residues 342 to 381 are disordered; it reads PMPVPQLVPETEDEKKRFEEGKGRYLQMKAKRQGHTEPQP. Residues 354–364 are compositionally biased toward basic and acidic residues; the sequence is DEKKRFEEGKG.

Homohexamer. As to expression, widely expressed with highest levels in brain. High levels also found in thymus, large intestine and testis. Negligible in muscle and adipose tissue. In the central and peripheral nervous systems, displays a predominantly neuronal localization with highest expression in cell bodies and neurites.

It is found in the cytoplasm. It localises to the cytosol. It carries out the reaction hexadecanoyl-CoA + H2O = hexadecanoate + CoA + H(+). The catalysed reaction is dodecanoyl-CoA + H2O = dodecanoate + CoA + H(+). The enzyme catalyses tetradecanoyl-CoA + H2O = tetradecanoate + CoA + H(+). It catalyses the reaction decanoyl-CoA + H2O = decanoate + CoA + H(+). It carries out the reaction octanoyl-CoA + H2O = octanoate + CoA + H(+). The catalysed reaction is octadecanoyl-CoA + H2O = octadecanoate + CoA + H(+). The enzyme catalyses (9Z)-octadecenoyl-CoA + H2O = (9Z)-octadecenoate + CoA + H(+). The protein operates within lipid metabolism; fatty acid metabolism. In terms of biological role, catalyzes the hydrolysis of acyl-CoAs into free fatty acids and coenzyme A (CoASH), regulating their respective intracellular levels. Preferentially hydrolyzes palmitoyl-CoA, but has a broad specificity acting on other fatty acyl-CoAs with chain-lengths of C8-C18. May play an important physiological function in brain. This chain is Cytosolic acyl coenzyme A thioester hydrolase (Acot7), found in Mus musculus (Mouse).